A 282-amino-acid chain; its full sequence is Formate channel FocB (282 aa).

At 1 to 35 (MRNKLSFDLQLSARKAAIAERIAAHKIARSKVSVF) the chain is on the cytoplasmic side. Residues 36 to 56 (LMAMSAGVFMAIGFTFYLSVI) traverse the membrane as a helical segment. The Periplasmic segment spans residues 57–68 (ADAPSSQALTHL). A helical transmembrane segment spans residues 69–89 (VGGLCFTLGFILLAVCGTSLF). Residues 90–112 (TSSVMTVMAKSRGVISWRTWLIN) lie on the Cytoplasmic side of the membrane. The helical transmembrane segment at 113-133 (ALLVACGNLAGIACFSLLIWF) threads the bilayer. At 134 to 163 (SGLVMSENAMWGVAVLHCAEGKMHHTFTES) the chain is on the periplasmic side. The chain crosses the membrane as a helical span at residues 164-184 (VSLGIMCNLMVCLALWMSYCG). Residues 185-190 (RSLCDK) are Cytoplasmic-facing. A helical transmembrane segment spans residues 191 to 211 (IVAMILPITLFVASGFEHCIA). Residues 212–248 (NLFVIPFAIAIRHFAPPPFWQLAHSSADNFPALTVSH) lie on the Periplasmic side of the membrane. The chain crosses the membrane as a helical span at residues 249–269 (FITANLLPVMLGNIIGGAVLV). The Cytoplasmic segment spans residues 270–282 (SMCYRAIYLRQEP).

This sequence belongs to the FNT transporter (TC 1.A.16) family.

It is found in the cell inner membrane. It carries out the reaction formate(in) = formate(out). The direction of formate translocation depends on external pH and electron donor source. Involved in the bidirectional transport of formate during mixed-acid fermentation. In Escherichia coli (strain K12), this protein is Formate channel FocB.